The primary structure comprises 565 residues: MKIPEEEVALLEDYVSDSVDHRGFPAGKSSTGGWRSAWFIIGVEVAERFAYFGIACNLITYLTGPLGQSTAKAAVNVNTWSGTASILPILGAFVADAYLGRYRTIVVASLIYILGLGLLTLSASLIIMGLSKQRNDASAKPSIWVNTLFFCSLYLVAIGQGGHKPCVQAFGADQFDAEDPKEVIARGSFFNWWFLSLSAGISISIIVVAYVQENVNWAFGFGIPCLFMVMALAIFLLGRKIYRYPKGHHEEVNSSNTFARIGRVFVIAFKNRKLRLEHSSLELDQGLLEDGQSEKRKDRLNFLAKAMISREGVEPCSGRDVDDAKALVRLIPIWITYVVSTIPYAQYITFFTKQGVTVDRRILPGVEIPAASLLSFVGVSILISVPLYERVFLPIARKITKKPFGITMLQRIGAGMVLSVFNMMLAALVESKRLKIAREHGLVDKPDVTVPMSIWWFVPQYLLLGMIDLFSMVGTQEFFYDQVPTELRSIGLSLSLSAMGLSSFLSGFLISLIDWATGKDGWFNSNLNRAHVDYFYWLLAAFTAIAFFAFLFISKMYVYRRLDQV.

2 helical membrane passes run 49-67 (FAYF…GPLG) and 80-100 (WSGT…AYLG). Threonine 104 bears the Phosphothreonine mark. 10 consecutive transmembrane segments (helical) span residues 110–130 (LIYI…IMGL), 142–162 (SIWV…GQGG), 189–209 (FFNW…IVVA), 217–237 (WAFG…IFLL), 331–351 (IPIW…ITFF), 368–388 (IPAA…VPLY), 409–429 (LQRI…AALV), 454–474 (IWWF…SMVG), 490–510 (IGLS…GFLI), and 534–554 (YFYW…LFIS).

The protein belongs to the major facilitator superfamily. Proton-dependent oligopeptide transporter (POT/PTR) (TC 2.A.17) family. As to expression, expressed in shoots, roots and leaves.

Its subcellular location is the membrane. The sequence is that of Protein NRT1/ PTR FAMILY 5.15 (NPF5.15) from Arabidopsis thaliana (Mouse-ear cress).